Here is a 258-residue protein sequence, read N- to C-terminus: Venom plasminogen activator Haly-PA (258 aa).

A signal peptide spans 1-18 (MALIRVLANLLILQLSYA). The propeptide occupies 19–24 (QKSSEL). The 225-residue stretch at 25-249 (VVGGDECNIN…HLDWIKSIIA (225 aa)) folds into the Peptidase S1 domain. Cystine bridges form between cysteine 31–cysteine 163, cysteine 50–cysteine 66, cysteine 98–cysteine 256, cysteine 142–cysteine 210, cysteine 174–cysteine 189, and cysteine 200–cysteine 225. A glycan (N-linked (GlcNAc...) asparagine) is linked at asparagine 44. Residues histidine 65 and aspartate 110 each act as charge relay system in the active site. The active-site Charge relay system is serine 204.

This sequence belongs to the peptidase S1 family. Snake venom subfamily. Monomer. Glycosylated. Expressed by the venom gland.

Its subcellular location is the secreted. Snake venom serine protease that activates plasminogen. Displays indirect fibrino(geno)lytic activity through conversion of plasminogen to plasmin. Shows a preferential cleavage at Arg-|-Xaa instead of Lys-|-Xaa bonds. The polypeptide is Venom plasminogen activator Haly-PA (Gloydius brevicauda (Korean slamosa snake)).